Consider the following 185-residue polypeptide: Elongation factor P (185 aa).

This sequence belongs to the elongation factor P family.

Its subcellular location is the cytoplasm. The protein operates within protein biosynthesis; polypeptide chain elongation. Its function is as follows. Involved in peptide bond synthesis. Stimulates efficient translation and peptide-bond synthesis on native or reconstituted 70S ribosomes in vitro. Probably functions indirectly by altering the affinity of the ribosome for aminoacyl-tRNA, thus increasing their reactivity as acceptors for peptidyl transferase. This chain is Elongation factor P, found in Bacillus cereus (strain ATCC 10987 / NRS 248).